We begin with the raw amino-acid sequence, 289 residues long: Tachykinins (289 aa).

Positions 1-24 (MRPLSGLIALALLLLLLLTAPSSA) are cleaved as a signal peptide. Positions 24–94 (AADTETESSG…DEEADSSYAE (71 aa)) are disordered. Residues 25-47 (ADTETESSGSPLTPGAEEPRRVV) constitute a propeptide that is removed on maturation. At arginine 59 the chain carries Arginine amide. Positions 60-69 (GKKDEEHDTS) are enriched in basic and acidic residues. Asparagine amide is present on asparagine 95. At arginine 110 the chain carries Arginine amide. Valine 153 is subject to Valine amide. 4 positions are modified to arginine amide: arginine 165, arginine 200, arginine 239, and arginine 281. The propeptide occupies 285–289 (PALFE).

It belongs to the tachykinin family. Strong expression is seen in a group of 14 cells plus one isolated cell in the midgut of stage 17 embryos. Also expressed in a pair of medially located unidentified cells, just posterior to the brain, and in two lateral groups of cells that may be associated with tracheae. Expression in the larval gut is restricted to cells with endocrine cell-like morphology in the posterior midgut, just anterior to the malphigian tubules. In the brain, expression is detected in a restricted number of neuronal cell bodies. Expression in the adult female gut is restricted to the midgut with no expression detected in the hindgut.

It localises to the secreted. In terms of biological role, tachykinins are active peptides which excite neurons, evoke behavioral responses, are potent vasodilators and secretagogues, and contract (directly or indirectly) many smooth muscles. Stimulates gut muscle contractions. Required for the response to the male sex pheromone CH503 which is transferred from males to females during mating and inhibits courtship behavior by other males. The Gr68a gustatory receptor is required for detection of the pheromone and Gr68a-expressing neurons in the male foreleg relay signals to the suboesophageal zone (SEZ) which leads to courtship suppression through release of tachykinin from a cluster of 8-10 neurons in the SEZ. This Drosophila melanogaster (Fruit fly) protein is Tachykinins.